A 293-amino-acid chain; its full sequence is Bifunctional protein FolD (293 aa).

Residues 164–166, S193, and T234 each bind NADP(+); that span reads GRS.

The protein belongs to the tetrahydrofolate dehydrogenase/cyclohydrolase family. In terms of assembly, homodimer.

The catalysed reaction is (6R)-5,10-methylene-5,6,7,8-tetrahydrofolate + NADP(+) = (6R)-5,10-methenyltetrahydrofolate + NADPH. The enzyme catalyses (6R)-5,10-methenyltetrahydrofolate + H2O = (6R)-10-formyltetrahydrofolate + H(+). It participates in one-carbon metabolism; tetrahydrofolate interconversion. Catalyzes the oxidation of 5,10-methylenetetrahydrofolate to 5,10-methenyltetrahydrofolate and then the hydrolysis of 5,10-methenyltetrahydrofolate to 10-formyltetrahydrofolate. This chain is Bifunctional protein FolD, found in Bacteroides fragilis (strain ATCC 25285 / DSM 2151 / CCUG 4856 / JCM 11019 / LMG 10263 / NCTC 9343 / Onslow / VPI 2553 / EN-2).